A 416-amino-acid polypeptide reads, in one-letter code: Isobutyryl-CoA dehydrogenase, mitochondrial (416 aa).

A mitochondrion-targeting transit peptide spans 1-23 (MMLRGGCQRVGARLRGLRRGPRG). Lys-51 carries the N6-acetyllysine; alternate modification. Position 51 is an N6-succinyllysine; alternate (Lys-51). FAD contacts are provided by residues 159–168 (YCLTEPGSGS) and 192–194 (FIS). Ser-168 lines the substrate pocket. N6-acetyllysine is present on Lys-232. Lys-272 carries the N6-succinyllysine modification. 275 to 278 (NGGR) lines the substrate pocket. Residues Arg-303, 313–314 (SQ), and 372–376 (QMHGG) each bind FAD. The Proton acceptor role is filled by Glu-399. 401–403 (SNE) serves as a coordination point for FAD. Arg-411 contributes to the substrate binding site.

It belongs to the acyl-CoA dehydrogenase family. In terms of assembly, homotetramer, formed by a dimer of dimers. FAD serves as cofactor.

It localises to the mitochondrion. The catalysed reaction is 2-methylpropanoyl-CoA + oxidized [electron-transfer flavoprotein] + H(+) = 2-methylpropenoyl-CoA + reduced [electron-transfer flavoprotein]. The enzyme catalyses (2S)-2-methylbutanoyl-CoA + oxidized [electron-transfer flavoprotein] + H(+) = (2E)-2-methylbut-2-enoyl-CoA + reduced [electron-transfer flavoprotein]. It carries out the reaction propanoyl-CoA + oxidized [electron-transfer flavoprotein] + H(+) = acryloyl-CoA + reduced [electron-transfer flavoprotein]. Its pathway is amino-acid degradation; L-valine degradation. Functionally, isobutyryl-CoA dehydrogenase which catalyzes the conversion of 2-methylpropanoyl-CoA to (2E)-2-methylpropenoyl-CoA in the valine catabolic pathway. To a lesser extent, also able to catalyze the oxidation of (2S)-2-methylbutanoyl-CoA. This Bos taurus (Bovine) protein is Isobutyryl-CoA dehydrogenase, mitochondrial (ACAD8).